The following is a 502-amino-acid chain: Protein DETOXIFICATION 7 (502 aa).

12 helical membrane-spanning segments follow: residues 36-56, 68-88, 112-132, 143-163, 182-202, 208-228, 262-282, 291-311, 331-351, 375-395, 408-428, and 436-456; these read MAAPMVAVSVSQFLLQVISMV, AVAIATSLTNVTGFSLIVGFA, YSSMLCLLVFCFSISIVWFFM, PLISQLACRYSIWLIPALFGF, LFVSSLGALCFHIPFCWLLVY, IVGAALSIGFSYWLNVFLLWI, AMMICLEWWSFEILLLMSGLL, VISICLTTSAVHFVLVNAIGA, AAVNSAIFLGGVGALITTITL, ITPILCLSIFVNSFLAVLSGV, ASLGSYYLVGIPLGWFLCFVM, and WIGILIASTIQLIVFALVTFF.

It belongs to the multi antimicrobial extrusion (MATE) (TC 2.A.66.1) family.

It is found in the membrane. The chain is Protein DETOXIFICATION 7 from Arabidopsis thaliana (Mouse-ear cress).